The sequence spans 601 residues: Elongation factor 4 (601 aa).

One can recognise a tr-type G domain in the interval D7–K189. Residues D19–T24 and N136–D139 each bind GTP.

This sequence belongs to the TRAFAC class translation factor GTPase superfamily. Classic translation factor GTPase family. LepA subfamily.

It localises to the cell inner membrane. It carries out the reaction GTP + H2O = GDP + phosphate + H(+). Its function is as follows. Required for accurate and efficient protein synthesis under certain stress conditions. May act as a fidelity factor of the translation reaction, by catalyzing a one-codon backward translocation of tRNAs on improperly translocated ribosomes. Back-translocation proceeds from a post-translocation (POST) complex to a pre-translocation (PRE) complex, thus giving elongation factor G a second chance to translocate the tRNAs correctly. Binds to ribosomes in a GTP-dependent manner. This chain is Elongation factor 4, found in Methylobacterium nodulans (strain LMG 21967 / CNCM I-2342 / ORS 2060).